The following is a 645-amino-acid chain: Exoribonuclease 2 (645 aa).

In terms of domain architecture, RNB spans 191–517 (REDLTELNFI…MNHRLLKALI (327 aa)). The region spanning 563–645 (HIRYSAEIID…DNRSIIAKIV (83 aa)) is the S1 motif domain.

It belongs to the RNR ribonuclease family. RNase II subfamily.

It localises to the cytoplasm. It catalyses the reaction Exonucleolytic cleavage in the 3'- to 5'-direction to yield nucleoside 5'-phosphates.. In terms of biological role, involved in mRNA degradation. Hydrolyzes single-stranded polyribonucleotides processively in the 3' to 5' direction. This is Exoribonuclease 2 from Baumannia cicadellinicola subsp. Homalodisca coagulata.